Consider the following 128-residue polypeptide: Mu-like prophage FluMu protein gp35 (128 aa).

The segment at 53–87 (TETGSQEGGEGLSKEPAGSDEQKQLRADPPSTDLN) is disordered.

This sequence to phage Mu protein gp35. Monomer.

The protein is Mu-like prophage FluMu protein gp35 of Haemophilus influenzae (strain ATCC 51907 / DSM 11121 / KW20 / Rd).